The primary structure comprises 1196 residues: uncharacterized protein (1196 aa).

A helical membrane pass occupies residues 27–47 (ILLLLGSFILLNVWINVVTLL). Disordered regions lie at residues 150 to 345 (GGGE…PQAH), 367 to 402 (SSVP…ASAP), 669 to 762 (TQDS…QKNT), 775 to 806 (CLTQ…DSGI), 826 to 877 (QATD…QDSE), 960 to 1009 (YRSS…GPYK), and 1168 to 1196 (KCEA…DIRM). The span at 157-177 (VTASKAQASLLSRPETSSQFP) shows a compositional bias: polar residues. Composition is skewed to low complexity over residues 212 to 227 (HSPT…HPWT) and 253 to 279 (THSQ…TPAH). Polar residues predominate over residues 299 to 321 (HTSAQAQTHSPPHTPEYTHSQAH). Residues 391–402 (APTPAPVPASAP) show a composition bias toward pro residues. 4 stretches are compositionally biased toward polar residues: residues 733–742 (YLCQNPSPSQ), 750–762 (SGIT…QKNT), 787–804 (PFTQ…TQDS), and 826–849 (QATD…TGNV). Residues 962–971 (SSEHSQDSNL) are compositionally biased toward basic and acidic residues.

The protein resides in the membrane. This is an uncharacterized protein from Homo sapiens (Human).